The following is a 165-amino-acid chain: Nucleotide-binding protein P9301_05061 (165 aa).

This sequence belongs to the YajQ family.

In terms of biological role, nucleotide-binding protein. The sequence is that of Nucleotide-binding protein P9301_05061 from Prochlorococcus marinus (strain MIT 9301).